The following is a 745-amino-acid chain: uncharacterized protein (745 aa).

The 99-residue stretch at 158–256 folds into the HTH araC/xylS-type domain; that stretch reads NQVCDYIELH…HQTPKQYRGD (99 aa). 2 consecutive DNA-binding regions (H-T-H motif) follow at residues 175 to 196 and 223 to 246; these read SELS…AESL and ITDI…KHIT.

This is an uncharacterized protein from Staphylococcus aureus.